A 419-amino-acid polypeptide reads, in one-letter code: Phospholipase A1-IIgamma (419 aa).

2 coiled-coil regions span residues 1–21 (MKRK…EFAK) and 207–227 (NARD…KDEE). Serine 236 (acyl-ester intermediate) is an active-site residue. Catalysis depends on charge relay system residues serine 236, aspartate 302, and histidine 339.

Belongs to the AB hydrolase superfamily. Lipase family. In terms of tissue distribution, expressed in seedlings, stems and siliques, and, to a lower extent, in flowers.

The protein localises to the cytoplasm. Functionally, acylhydrolase that catalyzes the hydrolysis of 1,3-diacylglycerol (1,3-DAG) and 1-monoacylglycerol (1-MAG) at the sn-1 position. High activity toward 1,3-DAG and 1-MAG, but low activity toward 1,2-diacylglycerol (1,2-DAG) and 1-lysophosphatidylcholine (1-LPC), and no activity toward phosphatidylcholine (PC), monogalactosyldiacylglycerol (MGDG), digalactosyldiacylglycerol (DGDG), triacylglycerol (TAG) and 2-monoacylglycerol (2-MAG). May be involved in the negative regulation of seedling establishment by inhibiting the breakdown, beta-oxidation and mobilization of seed storage oils. The protein is Phospholipase A1-IIgamma (DSEL) of Arabidopsis thaliana (Mouse-ear cress).